The chain runs to 538 residues: Probable inorganic phosphate transporter 1-4 (538 aa).

The Cytoplasmic portion of the chain corresponds to 1-23; the sequence is MAGELKVLNALDSAKTQWYHFTA. A helical transmembrane segment spans residues 24-44; that stretch reads IVIAGMGFFTDAYDLFSISLV. The Extracellular segment spans residues 45-69; sequence TKLLGRIYYFNPASKSPGSLPPNVS. Residues 70–90 traverse the membrane as a helical segment; it reads AAVNGVAFCGTLAGQLFFGWL. The Cytoplasmic segment spans residues 91-98; the sequence is GDKMGRKK. A helical transmembrane segment spans residues 99 to 119; that stretch reads VYGMTLMLMVICCLASGLSFG. Residues 120–123 lie on the Extracellular side of the membrane; sequence SSAK. Residues 124–144 form a helical membrane-spanning segment; that stretch reads GVMATLCFFRFWLGFGIGGDY. The Cytoplasmic portion of the chain corresponds to 145 to 163; it reads PLSATIMSEYANKRTRGAF. The chain crosses the membrane as a helical span at residues 164-184; sequence IAAVFAMQGFGNLTGGIVAII. Residues 185-210 are Extracellular-facing; that stretch reads VSAAFKSRFDAPAYRDDRTGSTVPQA. The chain crosses the membrane as a helical span at residues 211–231; sequence DYAWRIVLMFGAIPALLTYYW. The Cytoplasmic segment spans residues 232-294; the sequence is RMKMPETARY…RQFLRRHGRH (63 aa). The chain crosses the membrane as a helical span at residues 295–315; sequence LLGTTVCWFVLDIAFYSSNLF. Residues 316–346 lie on the Extracellular side of the membrane; that stretch reads QKDIYTAVQWLPKADTMSALEEMFKISRAQT. Residues 347 to 367 traverse the membrane as a helical segment; that stretch reads LVALCGTIPGYWFTVFFIDII. The Cytoplasmic segment spans residues 368 to 369; sequence GR. A helical membrane pass occupies residues 370 to 390; the sequence is FVIQLGGFFFMTAFMLGLAVP. Topologically, residues 391–396 are extracellular; sequence YHHWTT. Residues 397–417 traverse the membrane as a helical segment; sequence PGNHIGFVVMYAFTFFFANFG. The Cytoplasmic segment spans residues 418–440; that stretch reads PNSTTFIVPAEIFPARLRSTCHG. The chain crosses the membrane as a helical span at residues 441 to 461; it reads ISAAAGKAGAIVGSFGFLYAA. Topologically, residues 462–481 are extracellular; the sequence is QSTDASKTDAGYPPGIGVRN. A helical transmembrane segment spans residues 482 to 502; it reads SLFFLAGCNVIGFFFTFLVPE. The Cytoplasmic portion of the chain corresponds to 503-538; the sequence is SKGKSLEELSGENEDDDDVPEAPATADHRTAPAPPA. The segment at 507–538 is disordered; the sequence is SLEELSGENEDDDDVPEAPATADHRTAPAPPA. Over residues 511-522 the composition is skewed to acidic residues; the sequence is LSGENEDDDDVP.

It belongs to the major facilitator superfamily. Phosphate:H(+) symporter (TC 2.A.1.9) family. As to expression, expressed at low levels in roots.

Its subcellular location is the membrane. High-affinity transporter for external inorganic phosphate. The polypeptide is Probable inorganic phosphate transporter 1-4 (PHT1-4) (Oryza sativa subsp. japonica (Rice)).